The primary structure comprises 553 residues: uncharacterized protein (553 aa).

The next 5 helical transmembrane spans lie at 13–30, 37–59, 69–91, 98–120, and 157–179; these read ALQA…GLGL, GISL…GLSI, SFGL…FSSF, LNML…SYTT, and TPAL…AVLL. RCK C-terminal domains follow at residues 190 to 273 and 281 to 365; these read LEVQ…LFGE and KEDI…VLGN. 6 helical membrane passes run 375-397, 402-424, 436-458, 468-490, 497-514, and 529-551; these read LVAV…SIPG, VRLG…GPRL, LMLR…GAHF, LLWI…FFAF, FGSV…PMAL, and AYAT…LLMF.

Belongs to the AAE transporter (TC 2.A.81) family.

It is found in the cell membrane. This is an uncharacterized protein from Bacteroides fragilis (strain YCH46).